A 370-amino-acid polypeptide reads, in one-letter code: MQIYKVGGAVRDRLLGRPVSDIDWLVVGASVEEMHAKGFRPVGADFPVFLHPKTGEEYALARTERKSGRGYGGFTFHASPEVTLEEDLIRRDLTINAMAEDDQGNVLDPFHGRADLEQRLLRHVSPAFAEDPLRVLRVARFAARYAPLGFRVADETLELMKQIAASGELQALTAERSWKEIERALMEDEPQVFINVLSDCAALKQLMPELEGDAAALAALTQAAEHHQPLHIRWACLLHNLKPASIKALNQRFKAPRECQELAMLVGECASNGHRALQLEPEDMLALLQKFDVYRRPQRFEDFISVCQMVARGSGQAYPQADYLRAAAAAARAVEAKPLVEAGLTGQALGEALRHQRLEALKAYKANAEN.

ATP contacts are provided by Gly8 and Arg11. Gly8 and Arg11 together coordinate CTP. The Mg(2+) site is built by Asp21 and Asp23. ATP contacts are provided by Arg91, Arg137, and Arg140. Residues Arg91, Arg137, and Arg140 each coordinate CTP.

It belongs to the tRNA nucleotidyltransferase/poly(A) polymerase family. Bacterial CCA-adding enzyme type 2 subfamily. Requires Mg(2+) as cofactor.

It carries out the reaction a tRNA precursor + 2 CTP + ATP = a tRNA with a 3' CCA end + 3 diphosphate. It catalyses the reaction a tRNA with a 3' CCA end + 2 CTP + ATP = a tRNA with a 3' CCACCA end + 3 diphosphate. Catalyzes the addition and repair of the essential 3'-terminal CCA sequence in tRNAs without using a nucleic acid template. Adds these three nucleotides in the order of C, C, and A to the tRNA nucleotide-73, using CTP and ATP as substrates and producing inorganic pyrophosphate. tRNA 3'-terminal CCA addition is required both for tRNA processing and repair. Also involved in tRNA surveillance by mediating tandem CCA addition to generate a CCACCA at the 3' terminus of unstable tRNAs. While stable tRNAs receive only 3'-terminal CCA, unstable tRNAs are marked with CCACCA and rapidly degraded. The chain is CCA-adding enzyme from Pseudomonas putida (strain W619).